We begin with the raw amino-acid sequence, 230 residues long: Large ribosomal subunit protein uL1 (230 aa).

The protein belongs to the universal ribosomal protein uL1 family. In terms of assembly, part of the 50S ribosomal subunit.

Binds directly to 23S rRNA. The L1 stalk is quite mobile in the ribosome, and is involved in E site tRNA release. Functionally, protein L1 is also a translational repressor protein, it controls the translation of the L11 operon by binding to its mRNA. In Erythrobacter litoralis (strain HTCC2594), this protein is Large ribosomal subunit protein uL1.